The following is a 278-amino-acid chain: 4-diphosphocytidyl-2-C-methyl-D-erythritol kinase (278 aa).

The active site involves K9. Position 93–103 (93–103 (PISAGLAGGSS)) interacts with ATP. D135 is an active-site residue.

It belongs to the GHMP kinase family. IspE subfamily.

It catalyses the reaction 4-CDP-2-C-methyl-D-erythritol + ATP = 4-CDP-2-C-methyl-D-erythritol 2-phosphate + ADP + H(+). It functions in the pathway isoprenoid biosynthesis; isopentenyl diphosphate biosynthesis via DXP pathway; isopentenyl diphosphate from 1-deoxy-D-xylulose 5-phosphate: step 3/6. Functionally, catalyzes the phosphorylation of the position 2 hydroxy group of 4-diphosphocytidyl-2C-methyl-D-erythritol. The chain is 4-diphosphocytidyl-2-C-methyl-D-erythritol kinase from Finegoldia magna (strain ATCC 29328 / DSM 20472 / WAL 2508) (Peptostreptococcus magnus).